The following is a 1003-amino-acid chain: Lon protease homolog 2, peroxisomal (1003 aa).

Residues 14–305 enclose the Lon N-terminal domain; sequence LPCFTLVDAP…LFSTCVQDFQ (292 aa). Residues 367–389 form a disordered region; the sequence is DVTSPNKFLKTSSSHDEDSDSND. Residues 368–377 show a composition bias toward polar residues; the sequence is VTSPNKFLKT. ATP is bound at residue 520 to 527; that stretch reads GPPGVGKT. The region spanning 773–969 is the Lon proteolytic domain; the sequence is SEKFGVVNGL…QPELQKLKDK (197 aa). Catalysis depends on residues Ser-874 and Lys-917.

It belongs to the peptidase S16 family.

It is found in the peroxisome matrix. The enzyme catalyses Hydrolysis of proteins in presence of ATP.. ATP-dependent serine protease that mediates the selective degradation of misfolded and unassembled polypeptides in the peroxisomal matrix. Necessary for type 2 peroxisome targeting signal (PTS2)-containing protein processing and facilitates peroxisome matrix protein import. This chain is Lon protease homolog 2, peroxisomal, found in Kluyveromyces lactis (strain ATCC 8585 / CBS 2359 / DSM 70799 / NBRC 1267 / NRRL Y-1140 / WM37) (Yeast).